A 605-amino-acid polypeptide reads, in one-letter code: Terpenoid synthase 18 (605 aa).

5 residues coordinate Mg(2+): aspartate 356, aspartate 360, asparagine 500, threonine 504, and glutamate 508. A DDXXD motif motif is present at residues 356 to 360 (DDTYD).

Belongs to the terpene synthase family. Tpsa subfamily. Mg(2+) serves as cofactor. It depends on Mn(2+) as a cofactor. In terms of tissue distribution, predominantly expressed in flowers and siliques but also in roots and leaves.

It is found in the cytoplasm. Its pathway is secondary metabolite biosynthesis; terpenoid biosynthesis. The chain is Terpenoid synthase 18 (TPS18) from Arabidopsis thaliana (Mouse-ear cress).